A 59-amino-acid polypeptide reads, in one-letter code: ATP synthase protein 8 (59 aa).

The helical transmembrane segment at 7–23 (LSPPFLYFELIGHFQVE) threads the bilayer.

This sequence belongs to the ATPase protein 8 family. F-type ATPases have 2 components, CF(1) - the catalytic core - and CF(0) - the membrane proton channel.

The protein resides in the mitochondrion membrane. In terms of biological role, mitochondrial membrane ATP synthase (F(1)F(0) ATP synthase or Complex V) produces ATP from ADP in the presence of a proton gradient across the membrane which is generated by electron transport complexes of the respiratory chain. F-type ATPases consist of two structural domains, F(1) - containing the extramembraneous catalytic core and F(0) - containing the membrane proton channel, linked together by a central stalk and a peripheral stalk. During catalysis, ATP synthesis in the catalytic domain of F(1) is coupled via a rotary mechanism of the central stalk subunits to proton translocation. Part of the complex F(0) domain. Minor subunit located with subunit a in the membrane. The sequence is that of ATP synthase protein 8 (MT-ATP8) from Oenothera berteroana (Bertero's evening primrose).